We begin with the raw amino-acid sequence, 142 residues long: MQMEEDRFPTTVADYCSEFDIPLKDLKLKCVFCRFYLTEQQLAAFYIKNLKLVWKNRYCFACCTPCLRLTAKFEAENYFQCMCKGEVLEVLTRIPLSSLSVRCFDCLTLLSFAEKIDCIISGQNFYLVRGRWRSYCRNCIEK.

Zinc fingers lie at residues 30-66 (CVFCRFYLTEQQLAAFYIKNLKLVWKNRYCFACCTPC) and 103-139 (CFDCLTLLSFAEKIDCIISGQNFYLVRGRWRSYCRNC).

The protein belongs to the papillomaviridae E6 protein family. In terms of assembly, forms homodimers. Interacts with ubiquitin-protein ligase UBE3A/E6-AP; this interaction stimulates UBE3A ubiquitin activity. Interacts with host BAK1.

The protein localises to the host cytoplasm. It is found in the host nucleus. In terms of biological role, plays a major role in the induction and maintenance of cellular transformation. E6 associates with host UBE3A/E6-AP ubiquitin-protein ligase and modulates its activity. Protects host keratinocytes from apoptosis by mediating the degradation of host BAK1. May also inhibit host immune response. The protein is Protein E6 of Homo sapiens (Human).